The primary structure comprises 341 residues: Ferredoxin--NADP reductase (341 aa).

FAD is bound by residues Asp-38, Gln-46, Tyr-51, Val-91, Phe-125, Asp-292, and Thr-333.

The protein belongs to the ferredoxin--NADP reductase type 2 family. In terms of assembly, homodimer. Requires FAD as cofactor.

The enzyme catalyses 2 reduced [2Fe-2S]-[ferredoxin] + NADP(+) + H(+) = 2 oxidized [2Fe-2S]-[ferredoxin] + NADPH. In Gluconacetobacter diazotrophicus (strain ATCC 49037 / DSM 5601 / CCUG 37298 / CIP 103539 / LMG 7603 / PAl5), this protein is Ferredoxin--NADP reductase.